A 66-amino-acid chain; its full sequence is Large ribosomal subunit protein bL35 (66 aa).

Composition is skewed to basic residues over residues 1 to 26 and 38 to 48; these read MPKM…KRSH and QKQKRKLRKSA. A disordered region spans residues 1–48; that stretch reads MPKMKTHKGAAKRFKKTGSGKLKRSHAFTSHLFANKSQKQKRKLRKSA.

It belongs to the bacterial ribosomal protein bL35 family.

This is Large ribosomal subunit protein bL35 from Halalkalibacterium halodurans (strain ATCC BAA-125 / DSM 18197 / FERM 7344 / JCM 9153 / C-125) (Bacillus halodurans).